Here is a 298-residue protein sequence, read N- to C-terminus: UDP-N-acetylenolpyruvoylglucosamine reductase (298 aa).

The region spanning Thr-27 to Glu-191 is the FAD-binding PCMH-type domain. The active site involves Arg-170. Ser-220 (proton donor) is an active-site residue. Glu-290 is an active-site residue.

This sequence belongs to the MurB family. Requires FAD as cofactor.

It is found in the cytoplasm. It carries out the reaction UDP-N-acetyl-alpha-D-muramate + NADP(+) = UDP-N-acetyl-3-O-(1-carboxyvinyl)-alpha-D-glucosamine + NADPH + H(+). It participates in cell wall biogenesis; peptidoglycan biosynthesis. Cell wall formation. The chain is UDP-N-acetylenolpyruvoylglucosamine reductase from Listeria innocua serovar 6a (strain ATCC BAA-680 / CLIP 11262).